Here is a 207-residue protein sequence, read N- to C-terminus: Outer-membrane lipoprotein LolB (207 aa).

A signal peptide spans 1 to 21 (MPLPDFRFIRLLPLAALVLTA). Cysteine 22 is lipidated: N-palmitoyl cysteine. Cysteine 22 carries the S-diacylglycerol cysteine lipid modification.

It belongs to the LolB family. In terms of assembly, monomer.

Its subcellular location is the cell outer membrane. In terms of biological role, plays a critical role in the incorporation of lipoproteins in the outer membrane after they are released by the LolA protein. In Escherichia coli O6:H1 (strain CFT073 / ATCC 700928 / UPEC), this protein is Outer-membrane lipoprotein LolB.